A 188-amino-acid polypeptide reads, in one-letter code: MRCDVRALALAARGLIELMIVIPMVAGCSNAGSNKSVGTISSTPGNTEGHHGPMFPRCGGISDQTMSQLTKVTGLTNTARNSVGCQWLAGGGIVGPHFSFSWYRGSPIGRERKTEELSRASVDDININGHSGFIAVGNEPSLGDSLCEVGIQFQDDFIEWSVSFSQKPFPSPCGIAKELTRQSIANSK.

The first 27 residues, 1-27 (MRCDVRALALAARGLIELMIVIPMVAG), serve as a signal peptide directing secretion. Cys28 carries N-palmitoyl cysteine lipidation. A lipid anchor (S-diacylglycerol cysteine) is attached at Cys28.

It localises to the cell membrane. The polypeptide is Putative lipoprotein LprB (lprB) (Mycobacterium leprae (strain TN)).